A 98-amino-acid polypeptide reads, in one-letter code: Acylphosphatase (98 aa).

The Acylphosphatase-like domain occupies 12-98 (TYYVRVRGVV…EKRFERFQQQ (87 aa)). Catalysis depends on residues Arg-27 and Asn-45.

Belongs to the acylphosphatase family.

The enzyme catalyses an acyl phosphate + H2O = a carboxylate + phosphate + H(+). The chain is Acylphosphatase (acyP) from Burkholderia cenocepacia (strain HI2424).